The chain runs to 462 residues: tRNA modification GTPase MnmE (462 aa).

The (6S)-5-formyl-5,6,7,8-tetrahydrofolate site is built by Arg26, Glu91, and Arg130. In terms of domain architecture, TrmE-type G spans 228 to 382 (GLSTAKIGRP…IEERINDIFF (155 aa)). Asn238 provides a ligand contact to K(+). GTP is bound by residues 238–243 (NVGKSQ), 257–263 (TDIEGTT), and 282–285 (DTAG). Ser242 lines the Mg(2+) pocket. Thr257, Ile259, and Thr262 together coordinate K(+). Thr263 serves as a coordination point for Mg(2+). Position 462 (Lys462) interacts with (6S)-5-formyl-5,6,7,8-tetrahydrofolate.

The protein belongs to the TRAFAC class TrmE-Era-EngA-EngB-Septin-like GTPase superfamily. TrmE GTPase family. Homodimer. Heterotetramer of two MnmE and two MnmG subunits. The cofactor is K(+).

It is found in the cytoplasm. Functionally, exhibits a very high intrinsic GTPase hydrolysis rate. Involved in the addition of a carboxymethylaminomethyl (cmnm) group at the wobble position (U34) of certain tRNAs, forming tRNA-cmnm(5)s(2)U34. This Streptococcus agalactiae protein is tRNA modification GTPase MnmE.